The primary structure comprises 317 residues: Acetyl-coenzyme A carboxylase carboxyl transferase subunit beta (317 aa).

The disordered stretch occupies residues 1 to 28; it reads MANNMTDTMTKFDTNNDSASLQQNGNKA. In terms of domain architecture, CoA carboxyltransferase N-terminal spans 55 to 317; the sequence is PSTKCSSCHS…LCSVPNVDAQ (263 aa). 4 residues coordinate Zn(2+): C59, C62, C78, and C81. The segment at 59–81 adopts a C4-type zinc-finger fold; sequence CSSCHSVITNTALIFNCYVCPHC.

It belongs to the AccD/PCCB family. As to quaternary structure, acetyl-CoA carboxylase is a heterohexamer composed of biotin carboxyl carrier protein (AccB), biotin carboxylase (AccC) and two subunits each of ACCase subunit alpha (AccA) and ACCase subunit beta (AccD). Zn(2+) serves as cofactor.

The protein resides in the cytoplasm. It catalyses the reaction N(6)-carboxybiotinyl-L-lysyl-[protein] + acetyl-CoA = N(6)-biotinyl-L-lysyl-[protein] + malonyl-CoA. It participates in lipid metabolism; malonyl-CoA biosynthesis; malonyl-CoA from acetyl-CoA: step 1/1. Functionally, component of the acetyl coenzyme A carboxylase (ACC) complex. Biotin carboxylase (BC) catalyzes the carboxylation of biotin on its carrier protein (BCCP) and then the CO(2) group is transferred by the transcarboxylase to acetyl-CoA to form malonyl-CoA. The protein is Acetyl-coenzyme A carboxylase carboxyl transferase subunit beta of Psychrobacter arcticus (strain DSM 17307 / VKM B-2377 / 273-4).